We begin with the raw amino-acid sequence, 299 residues long: Protein phosphatase 1 regulatory subunit 3D (299 aa).

Residues 1 to 22 (MSRGPSSAVLPSALGSRKLGPR) form a disordered region. Residues S23, S25, and S28 each carry the phosphoserine modification. The tract at residues 37 to 94 (EPRACRPPGSPGRAPPPTPAPSGCDPRLRPIILRRARSLPSSPERRQKAAGAPGAACR) is disordered. The segment covering 44 to 56 (PGSPGRAPPPTPA) has biased composition (pro residues). Over residues 57 to 67 (PSGCDPRLRPI) the composition is skewed to low complexity. The residue at position 74 (S74) is a Phosphoserine. Residues 85 to 94 (AAGAPGAACR) are compositionally biased toward low complexity. Positions 101 to 104 (LRVR) match the PP1-binding motif motif. S133 carries the phosphoserine modification. The CBM21 domain occupies 169–278 (GERLQRQLVC…NNDHRDYSLT (110 aa)).

In terms of assembly, interacts with PPP1CC catalytic subunit of PP1, and associates with glycogen. Interacts with EPM2A; in the presence of NHLC1/malin the interaction leads to PPP1R3D ubiquitination and autophagic degradation. In terms of tissue distribution, expressed in all tissues tested. High expression in skeletal muscle and heart.

Its function is as follows. Seems to act as a glycogen-targeting subunit for PP1. PP1 is essential for cell division, and participates in the regulation of glycogen metabolism, muscle contractility and protein synthesis. This Homo sapiens (Human) protein is Protein phosphatase 1 regulatory subunit 3D (PPP1R3D).